We begin with the raw amino-acid sequence, 702 residues long: Antigen peptide transporter 2 (702 aa).

At 1-6 (MALSYL) the chain is on the lumenal side. A helical transmembrane segment spans residues 7–27 (RPWVSLLLADMALLGLLQGSL). The Cytoplasmic portion of the chain corresponds to 28-56 (GNLLPQGLPGLWIEGTLRLGVLWGLLKVG). A helical transmembrane segment spans residues 57 to 77 (ELLGLVGTLLPLLCLATPLFF). Residues 78 to 98 (SLRALVGGTASTSVVRVASAS) are Lumenal-facing. The helical transmembrane segment at 99-119 (WGWLLAGYGAVALSWAVWAVL) threads the bilayer. Over 120–147 (SPAGVQEKEPGQENRTLMKRLLKLSRPD) the chain is Cytoplasmic. Residues 148–168 (LPFLIAAFFFLVVAVWGETLI) traverse the membrane as a helical segment. The 284-residue stretch at 151-434 (LIAAFFFLVV…LVYMYGDMLS (284 aa)) folds into the ABC transmembrane type-1 domain. Topologically, residues 169–186 (PRYSGRVIDILGGDFDPD) are lumenal. A helical transmembrane segment spans residues 187 to 207 (AFASAIFFMCLFSVGSSFSAG). Over 208–265 (CRGGSFLFTMSRINLRIREQLFSSLLRQDLGFFQETKTGELNSRLSSDTSLMSRWLPF) the chain is Cytoplasmic. A helical transmembrane segment spans residues 266–286 (NANILLRSLVKVVGLYFFMLQ). Over 287–292 (VSPRLT) the chain is Lumenal. Residues 293–313 (FLSLLDLPLTIAAEKVYNPRH) form a helical membrane-spanning segment. The segment at 300-388 (PLTIAAEKVY…RRVMALGMQV (89 aa)) is part of the peptide-binding site. Topologically, residues 314-373 (QAVLKEIQDAVAKAGQVVREAVGGLQTVRSFGAEEQEVSHYKEALERCRQLWWRRDLEKD) are cytoplasmic. The chain crosses the membrane as a helical span at residues 374–394 (VYLVIRRVMALGMQVLILNCG). At 395-407 (VQQILAGEVTRGG) the chain is on the lumenal side. Residues 408 to 428 (LLSFLLYQEEVGQYVRNLVYM) traverse the membrane as a helical segment. Residues 413 to 432 (LYQEEVGQYVRNLVYMYGDM) are part of the peptide-binding site. At 429-702 (YGDMLSNVGA…AHLVQQRLEA (274 aa)) the chain is on the cytoplasmic side. One can recognise an ABC transporter domain in the interval 467 to 701 (VEFQDVSFSY…YAHLVQQRLE (235 aa)). Residue 502-509 (GPNGSGKS) participates in ATP binding.

Belongs to the ABC transporter superfamily. ABCB family. MHC peptide exporter (TC 3.A.1.209) subfamily. In terms of assembly, heterodimer of TAP1 and TAP2 (TAP1-TAP2). A component of the peptide loading complex (PLC), interacts via TAPBP with MHCI heterodimer; this interaction mediates peptide-MHCI assembly. Mg(2+) serves as cofactor.

It localises to the endoplasmic reticulum membrane. It catalyses the reaction a peptide antigen(in) + ATP + H2O = a peptide antigen(out) + ADP + phosphate + H(+). ABC transporter associated with antigen processing. In complex with TAP1 mediates unidirectional translocation of peptide antigens from cytosol to endoplasmic reticulum (ER) for loading onto MHC class I (MHCI) molecules. Uses the chemical energy of ATP to export peptides against the concentration gradient. During the transport cycle alternates between 'inward-facing' state with peptide binding site facing the cytosol to 'outward-facing' state with peptide binding site facing the ER lumen. Peptide antigen binding to ATP-loaded TAP1-TAP2 induces a switch to hydrolysis-competent 'outward-facing' conformation ready for peptide loading onto nascent MHCI molecules. Subsequently ATP hydrolysis resets the transporter to the 'inward facing' state for a new cycle. As a component of the peptide loading complex (PLC), acts as a molecular scaffold essential for peptide-MHCI assembly and antigen presentation. This is Antigen peptide transporter 2 (Tap2) from Mus musculus (Mouse).